Reading from the N-terminus, the 84-residue chain is UPF0457 protein BALH_2270 (84 aa).

It belongs to the UPF0457 family.

This is UPF0457 protein BALH_2270 from Bacillus thuringiensis (strain Al Hakam).